Reading from the N-terminus, the 323-residue chain is Ribokinase (323 aa).

Substrate is bound by residues 26–28 (MTD), 54–58 (GKGAN), and glutamate 155. ATP contacts are provided by residues asparagine 200, 236–241 (TLGASG), and threonine 257. Residues aspartate 264 and threonine 266 each contribute to the K(+) site. ATP contacts are provided by residues 269–270 (GD) and asparagine 296. Aspartate 270 is a binding site for substrate. The active-site Proton acceptor is the aspartate 270. Serine 302, alanine 305, glycine 307, and serine 311 together coordinate K(+).

It belongs to the carbohydrate kinase PfkB family. Ribokinase subfamily. Homodimer. It depends on Mg(2+) as a cofactor.

It localises to the cytoplasm. The protein resides in the nucleus. It carries out the reaction D-ribose + ATP = D-ribose 5-phosphate + ADP + H(+). It participates in carbohydrate metabolism; D-ribose degradation; D-ribose 5-phosphate from beta-D-ribopyranose: step 2/2. With respect to regulation, activated by a monovalent cation that binds near, but not in, the active site. The most likely occupant of the site in vivo is potassium. Ion binding induces a conformational change that may alter substrate affinity. Competitively inhibited by phosphonoacetic acid, etidronate, 2-carboxethylphosphonic acid, N-(phosphonomethyl)glycine, N-(phosphonomethyl)iminodiacetic acid and clodronate. Functionally, catalyzes the phosphorylation of ribose at O-5 in a reaction requiring ATP and magnesium. The resulting D-ribose-5-phosphate can then be used either for sythesis of nucleotides, histidine, and tryptophan, or as a component of the pentose phosphate pathway. This is Ribokinase from Mus musculus (Mouse).